The following is a 248-amino-acid chain: MNQTNFGFKKVDYTKKQGLVNNVFSNVADKYDLMNDLMSLGLHRLWKDEFIRQIPNLNSHILDVASGSGDIALKLAKKARDRVNNISLTLSDINEEMLKQAKKKAIDLNLFQNLKFTVASAEELPFLDDSFDYYTIAFGIRNVPDINKALKEACRVLKPMGKFICLEFSKVKEGYMKDFYKFYSFNIIPSIGQMIAGNKEAYEYLVESIDLFPSQDEFRIMIKDAGFEEVGYKNLSGGIVAIHSAYTR.

2 residues coordinate S-adenosyl-L-methionine: S68 and D92.

It belongs to the class I-like SAM-binding methyltransferase superfamily. MenG/UbiE family.

The enzyme catalyses a 2-demethylmenaquinol + S-adenosyl-L-methionine = a menaquinol + S-adenosyl-L-homocysteine + H(+). The catalysed reaction is a 2-methoxy-6-(all-trans-polyprenyl)benzene-1,4-diol + S-adenosyl-L-methionine = a 5-methoxy-2-methyl-3-(all-trans-polyprenyl)benzene-1,4-diol + S-adenosyl-L-homocysteine + H(+). It participates in quinol/quinone metabolism; menaquinone biosynthesis; menaquinol from 1,4-dihydroxy-2-naphthoate: step 2/2. Its pathway is cofactor biosynthesis; ubiquinone biosynthesis. In terms of biological role, methyltransferase required for the conversion of demethylmenaquinol (DMKH2) to menaquinol (MKH2) and the conversion of 2-polyprenyl-6-methoxy-1,4-benzoquinol (DDMQH2) to 2-polyprenyl-3-methyl-6-methoxy-1,4-benzoquinol (DMQH2). The protein is Ubiquinone/menaquinone biosynthesis C-methyltransferase UbiE of Rickettsia peacockii (strain Rustic).